Consider the following 494-residue polypeptide: Guanosine-5'-triphosphate,3'-diphosphate pyrophosphatase (494 aa).

The protein belongs to the GppA/Ppx family. GppA subfamily.

The enzyme catalyses guanosine 3'-diphosphate 5'-triphosphate + H2O = guanosine 3',5'-bis(diphosphate) + phosphate + H(+). Its pathway is purine metabolism; ppGpp biosynthesis; ppGpp from GTP: step 2/2. Its function is as follows. Catalyzes the conversion of pppGpp to ppGpp. Guanosine pentaphosphate (pppGpp) is a cytoplasmic signaling molecule which together with ppGpp controls the 'stringent response', an adaptive process that allows bacteria to respond to amino acid starvation, resulting in the coordinated regulation of numerous cellular activities. The chain is Guanosine-5'-triphosphate,3'-diphosphate pyrophosphatase from Shigella flexneri.